A 457-amino-acid chain; its full sequence is Chromosomal replication initiator protein DnaA (457 aa).

A domain I, interacts with DnaA modulators region spans residues 1 to 75 (MDAQLNNLWE…ALKIVTSRKF (75 aa)). The domain II stretch occupies residues 75–118 (FKIEFYLESDLEEEKENEEKQKEEKKDNTNDVDGSIVVSDEMSA). The segment at 87–108 (EEKENEEKQKEEKKDNTNDVDG) is disordered. Residues 91 to 103 (NEEKQKEEKKDNT) are compositionally biased toward basic and acidic residues. The tract at residues 119–335 (TLNPKYTFQS…GALIRIIAYS (217 aa)) is domain III, AAA+ region. ATP-binding residues include G163, G165, K166, and T167. Positions 336-457 (SLTNRDVSVD…NDITKKLTQK (122 aa)) are domain IV, binds dsDNA.

This sequence belongs to the DnaA family. In terms of assembly, oligomerizes as a right-handed, spiral filament on DNA at oriC.

Its subcellular location is the cytoplasm. Functionally, plays an essential role in the initiation and regulation of chromosomal replication. ATP-DnaA binds to the origin of replication (oriC) to initiate formation of the DNA replication initiation complex once per cell cycle. Binds the DnaA box (a 9 base pair repeat at the origin) and separates the double-stranded (ds)DNA. Forms a right-handed helical filament on oriC DNA; dsDNA binds to the exterior of the filament while single-stranded (ss)DNA is stabiized in the filament's interior. The ATP-DnaA-oriC complex binds and stabilizes one strand of the AT-rich DNA unwinding element (DUE), permitting loading of DNA polymerase. After initiation quickly degrades to an ADP-DnaA complex that is not apt for DNA replication. Binds acidic phospholipids. This chain is Chromosomal replication initiator protein DnaA, found in Clostridium perfringens (strain SM101 / Type A).